Reading from the N-terminus, the 345-residue chain is N(4)-(Beta-N-acetylglucosaminyl)-L-asparaginase (345 aa).

An N-terminal signal peptide occupies residues 1 to 23 (MARKWNLPFLLLPLVLGIPLVRG). A glycan (N-linked (GlcNAc...) asparagine) is linked at N38. A disulfide bridge connects residues C64 and C69. N-linked (GlcNAc...) asparagine glycosylation occurs at N149. C163 and C179 are disulfide-bonded. T205 functions as the Nucleophile in the catalytic mechanism. Residues 233 to 236 (RVGD) and 256 to 259 (TGDG) each bind substrate. A disulfide bridge links C285 with C305. Residue N307 is glycosylated (N-linked (GlcNAc...) asparagine). Residues C316 and C344 are joined by a disulfide bond.

This sequence belongs to the Ntn-hydrolase family. In terms of assembly, heterotetramer of two alpha and two beta chains arranged as a dimer of alpha/beta heterodimers. In terms of processing, N-glycosylated. Post-translationally, cleaved into an alpha and beta chain by autocatalysis; this activates the enzyme. The N-terminal residue of the beta subunit is responsible for the nucleophile hydrolase activity.

It is found in the lysosome. It catalyses the reaction N(4)-(beta-N-acetyl-D-glucosaminyl)-L-asparagine + H2O = N-acetyl-beta-D-glucosaminylamine + L-aspartate + H(+). Functionally, cleaves the GlcNAc-Asn bond which joins oligosaccharides to the peptide of asparagine-linked glycoproteins. In Rattus norvegicus (Rat), this protein is N(4)-(Beta-N-acetylglucosaminyl)-L-asparaginase (Aga).